Here is a 482-residue protein sequence, read N- to C-terminus: Aspartyl/glutamyl-tRNA(Asn/Gln) amidotransferase subunit B (482 aa).

The protein belongs to the GatB/GatE family. GatB subfamily. In terms of assembly, heterotrimer of A, B and C subunits.

It catalyses the reaction L-glutamyl-tRNA(Gln) + L-glutamine + ATP + H2O = L-glutaminyl-tRNA(Gln) + L-glutamate + ADP + phosphate + H(+). It carries out the reaction L-aspartyl-tRNA(Asn) + L-glutamine + ATP + H2O = L-asparaginyl-tRNA(Asn) + L-glutamate + ADP + phosphate + 2 H(+). Its function is as follows. Allows the formation of correctly charged Asn-tRNA(Asn) or Gln-tRNA(Gln) through the transamidation of misacylated Asp-tRNA(Asn) or Glu-tRNA(Gln) in organisms which lack either or both of asparaginyl-tRNA or glutaminyl-tRNA synthetases. The reaction takes place in the presence of glutamine and ATP through an activated phospho-Asp-tRNA(Asn) or phospho-Glu-tRNA(Gln). In Methanoregula boonei (strain DSM 21154 / JCM 14090 / 6A8), this protein is Aspartyl/glutamyl-tRNA(Asn/Gln) amidotransferase subunit B.